Consider the following 273-residue polypeptide: Dermonecrotic toxin LhSicTox-alphaIA1iii (273 aa).

H5 is an active-site residue. 2 residues coordinate Mg(2+): E25 and D27. Catalysis depends on H41, which acts as the Nucleophile. 2 cysteine pairs are disulfide-bonded: C45–C51 and C47–C190. D85 provides a ligand contact to Mg(2+).

This sequence belongs to the arthropod phospholipase D family. Class II subfamily. Mg(2+) is required as a cofactor. Expressed by the venom gland.

It is found in the secreted. It catalyses the reaction an N-(acyl)-sphingosylphosphocholine = an N-(acyl)-sphingosyl-1,3-cyclic phosphate + choline. The enzyme catalyses an N-(acyl)-sphingosylphosphoethanolamine = an N-(acyl)-sphingosyl-1,3-cyclic phosphate + ethanolamine. The catalysed reaction is a 1-acyl-sn-glycero-3-phosphocholine = a 1-acyl-sn-glycero-2,3-cyclic phosphate + choline. It carries out the reaction a 1-acyl-sn-glycero-3-phosphoethanolamine = a 1-acyl-sn-glycero-2,3-cyclic phosphate + ethanolamine. Its function is as follows. Dermonecrotic toxins cleave the phosphodiester linkage between the phosphate and headgroup of certain phospholipids (sphingolipid and lysolipid substrates), forming an alcohol (often choline) and a cyclic phosphate. This toxin acts on sphingomyelin (SM). It may also act on ceramide phosphoethanolamine (CPE), lysophosphatidylcholine (LPC) and lysophosphatidylethanolamine (LPE), but not on lysophosphatidylserine (LPS), and lysophosphatidylglycerol (LPG). It acts by transphosphatidylation, releasing exclusively cyclic phosphate products as second products. Induces dermonecrosis, hemolysis, increased vascular permeability, edema, inflammatory response, and platelet aggregation. This is Dermonecrotic toxin LhSicTox-alphaIA1iii from Loxosceles hirsuta (Recluse spider).